Reading from the N-terminus, the 479-residue chain is Ribulose bisphosphate carboxylase large chain (479 aa).

Residues 1-2 (MS) constitute a propeptide that is removed on maturation. Pro3 carries the N-acetylproline modification. Lys14 is modified (N6,N6,N6-trimethyllysine). 2 residues coordinate substrate: Asn123 and Thr173. Residue Lys175 is the Proton acceptor of the active site. Residue Lys177 participates in substrate binding. Lys201, Asp203, and Glu204 together coordinate Mg(2+). Lys201 bears the N6-carboxylysine mark. Residue His294 is the Proton acceptor of the active site. Positions 295, 327, and 379 each coordinate substrate.

This sequence belongs to the RuBisCO large chain family. Type I subfamily. In terms of assembly, heterohexadecamer of 8 large chains and 8 small chains; disulfide-linked. The disulfide link is formed within the large subunit homodimers. Mg(2+) serves as cofactor. The disulfide bond which can form in the large chain dimeric partners within the hexadecamer appears to be associated with oxidative stress and protein turnover.

The protein resides in the plastid. It is found in the chloroplast. The enzyme catalyses 2 (2R)-3-phosphoglycerate + 2 H(+) = D-ribulose 1,5-bisphosphate + CO2 + H2O. It catalyses the reaction D-ribulose 1,5-bisphosphate + O2 = 2-phosphoglycolate + (2R)-3-phosphoglycerate + 2 H(+). In terms of biological role, ruBisCO catalyzes two reactions: the carboxylation of D-ribulose 1,5-bisphosphate, the primary event in carbon dioxide fixation, as well as the oxidative fragmentation of the pentose substrate in the photorespiration process. Both reactions occur simultaneously and in competition at the same active site. This is Ribulose bisphosphate carboxylase large chain from Ananas comosus (Pineapple).